The following is a 682-amino-acid chain: DNA-directed RNA polymerase subunit beta' (682 aa).

Cys-69, Cys-71, Cys-87, and Cys-90 together coordinate Zn(2+). Residues Asp-489, Asp-491, and Asp-493 each coordinate Mg(2+).

This sequence belongs to the RNA polymerase beta' chain family. RpoC1 subfamily. In plastids the minimal PEP RNA polymerase catalytic core is composed of four subunits: alpha, beta, beta', and beta''. When a (nuclear-encoded) sigma factor is associated with the core the holoenzyme is formed, which can initiate transcription. The cofactor is Mg(2+). Zn(2+) serves as cofactor.

Its subcellular location is the plastid. It localises to the chloroplast. The catalysed reaction is RNA(n) + a ribonucleoside 5'-triphosphate = RNA(n+1) + diphosphate. In terms of biological role, DNA-dependent RNA polymerase catalyzes the transcription of DNA into RNA using the four ribonucleoside triphosphates as substrates. This Hordeum vulgare (Barley) protein is DNA-directed RNA polymerase subunit beta'.